Reading from the N-terminus, the 5654-residue chain is Mucin-5AC (5654 aa).

The first 27 residues, 1 to 27, serve as a signal peptide directing secretion; sequence MSVGRRKLALLWALALALACTRHTGHA. A disordered region spans residues 27–49; it reads AQDGSSESSYKHHPALSPIARGP. Residues 79 to 249 form the VWFD 1 domain; sequence RVCSTWGSFH…KMDDPTDQCQ (171 aa). 2 cysteine pairs are disulfide-bonded: cysteine 81-cysteine 211 and cysteine 103-cysteine 248. Glutamate 198 provides a ligand contact to Cu(2+). Residues asparagine 205 and asparagine 258 are each glycosylated (N-linked (GlcNAc...) asparagine). Histidine 320 and histidine 367 together coordinate Cu(2+). Residues 338-394 form the TIL 1 domain; sequence CPNNMQYHECRSPCADTCSNQEHSRACEDHCVAGCFCPEGTVLDDIGQTGCVPVSKC. The VWFC 1 domain occupies 394 to 465; sequence CACVYNGAAY…CSYVLTKPCD (72 aa). N-linked (GlcNAc...) asparagine glycosylation occurs at asparagine 415. The region spanning 432–607 is the VWFD 2 domain; it reads GTCSVLGGAH…NTFKTQAACP (176 aa). Intrachain disulfides connect cysteine 434–cysteine 571, cysteine 456–cysteine 606, and cysteine 478–cysteine 486. The N-linked (GlcNAc...) asparagine glycan is linked to asparagine 524. TIL domains lie at 704-761 and 818-863; these read CPKS…ASNC and DTGA…AEDC. The region spanning 901-1072 is the VWFD 3 domain; it reads ATCAVYGDGH…NSWKLSPSCP (172 aa). Intrachain disulfides connect cysteine 903–cysteine 1036, cysteine 925–cysteine 1071, cysteine 934–cysteine 1033, and cysteine 953–cysteine 960. A glycan (N-linked (GlcNAc...) asparagine) is linked at asparagine 1308. The segment at 1336-1377 is disordered; it reads LVVSSTHTPSNGPSSAHTGPPSSAWPTTAGTSPRTRLPTASA. A compositionally biased stretch (polar residues) spans 1338-1377; the sequence is VSSTHTPSNGPSSAHTGPPSSAWPTTAGTSPRTRLPTASA. One copy of the Cys-rich subdomain 1 repeat lies at 1383–1481; the sequence is CGEKCLWSPW…RVQCCTPLPC (99 aa). The 9 X Cys-rich subdomain repeats stretch occupies residues 1383–4731; sequence CGEKCLWSPW…VLCCETPRGC (3349 aa). Tryptophan 1389 carries C-linked (Man) tryptophan glycosylation. 2 stretches are compositionally biased toward low complexity: residues 1483–1539 and 1547–1575; these read TSSS…TFST and ATSTSSMSTTAPGTSVVSSKPTPTEPSTS. Positions 1483 to 1575 are disordered; the sequence is TSSSPAQTTP…KPTPTEPSTS (93 aa). A Cys-rich subdomain 2 repeat occupies 1577–1677; the sequence is CLQELCTWTE…IQCCETVNVC (101 aa). C-linked (Man) tryptophan glycosylation is present at tryptophan 1584. The interval 1688-1733 is disordered; sequence ATTRPTPHPTGAQTQTTFTTHMPSASTEQPTATSRGGPTATSVTQG. Over residues 1697–1707 the composition is skewed to low complexity; sequence TGAQTQTTFTT. Residues 1708–1733 show a composition bias toward polar residues; sequence HMPSASTEQPTATSRGGPTATSVTQG. The stretch at 1743–1847 is one Cys-rich subdomain 3 repeat; sequence CHPRCTWTKW…VLCCETPRGC (105 aa). Tryptophan 1749 carries a C-linked (Man) tryptophan glycan. The segment at 1849 to 1948 is disordered; the sequence is MTSTPGSTSS…KPTPTEPSTS (100 aa). Low complexity-rich tracts occupy residues 1850 to 1912 and 1920 to 1948; these read TSTP…TFST and ATSTSSMSTTAPGTSVVSSKPTPTEPSTS. Residues 1950 to 2050 form a Cys-rich subdomain 4 repeat; the sequence is CLQELCTWTE…IQCCETVNVC (101 aa). Tryptophan 1957 carries C-linked (Man) tryptophan glycosylation. Residues 2059–2110 form a disordered region; it reads TVATTRPTPHPTGAQTQTTFTTHMPSASTEQPTATSRGGPTATSVTQGTHTT. Low complexity predominate over residues 2070–2080; sequence TGAQTQTTFTT. A compositionally biased stretch (polar residues) spans 2081-2110; the sequence is HMPSASTEQPTATSRGGPTATSVTQGTHTT. Residues 2116-2220 form a Cys-rich subdomain 5 repeat; the sequence is CHPRCTWTTW…VLCCETPKGC (105 aa). A glycan (C-linked (Man) tryptophan) is linked at tryptophan 2122. Low complexity predominate over residues 2224–2234; sequence STPVTAPSTPS. A disordered region spans residues 2224-3214; it reads STPVTAPSTP…SHVSISKTTH (991 aa). The segment covering 2235–2249 has biased composition (polar residues); the sequence is GRATSPTQSTSSWQK. Composition is skewed to low complexity over residues 2250-3184 and 3192-3214; these read SRTT…TPGP and PTTSTASVSKTSTSHVSISKTTH. The 107 X 8 AA approximate tandem repeats of T-T-S-T-T-S-A-P stretch occupies residues 2257 to 3200; that stretch reads TTSTTSTPQT…VPTTSTASVS (944 aa). O-linked (GalNAc) threonine glycosylation is found at threonine 2395, threonine 2405, threonine 2451, threonine 2461, threonine 2531, threonine 2541, threonine 2571, threonine 2581, threonine 2699, threonine 2709, threonine 2883, threonine 2893, threonine 2979, threonine 2989, threonine 3067, and threonine 3077. The stretch at 3222–3326 is one Cys-rich subdomain 6 repeat; that stretch reads CHLRCTWTKW…VLCCETPKGC (105 aa). The C-linked (Man) tryptophan glycan is linked to tryptophan 3228. Over residues 3329–3340 the composition is skewed to low complexity; sequence TSTPVTAPSTPS. A disordered region spans residues 3329 to 3515; that stretch reads TSTPVTAPST…SVSKTTHSQP (187 aa). The segment covering 3341-3355 has biased composition (polar residues); that stretch reads GRATSPTQSTSSWQK. The span at 3356-3513 shows a compositional bias: low complexity; that stretch reads SRTTTLVTTS…HVSVSKTTHS (158 aa). The 17 X 8 AA approximate tandem repeats of T-T-S-T-T-S-A-P stretch occupies residues 3363 to 3498; sequence TTSTTSTPQT…VTTTSTASVS (136 aa). Residues 3520–3660 form a Cys-rich subdomain 7 repeat; that stretch reads CHPRCTWTKW…WQKSRTTTLV (141 aa). Residue tryptophan 3526 is glycosylated (C-linked (Man) tryptophan). A compositionally biased stretch (low complexity) spans 3628–3638; sequence STSVTAPSTPS. Residues 3628 to 3951 form a disordered region; sequence STSVTAPSTP…KTTHSQPVTR (324 aa). The span at 3639–3660 shows a compositional bias: polar residues; that stretch reads GRATSPTQSTSSWQKSRTTTLV. The 34 X 8 AA approximate tandem repeats of T-T-S-T-T-S-A-P stretch occupies residues 3661–3931; sequence TSSITSTTQT…VPTTSTASVS (271 aa). Over residues 3661–3946 the composition is skewed to low complexity; the sequence is TSSITSTTQT…HVSVSKTTHS (286 aa). A glycan (N-linked (GlcNAc...) asparagine) is linked at asparagine 3774. The Cys-rich subdomain 8 repeat unit spans residues 3953–4057; that stretch reads CHPRCTWTKW…VLCCETPKGC (105 aa). C-linked (Man) tryptophan glycosylation is present at tryptophan 3959. Over residues 4060–4071 the composition is skewed to low complexity; that stretch reads TSTPVTAPSTPS. The segment at 4060–4625 is disordered; it reads TSTPVTAPST…KTTHSQPVTS (566 aa). A compositionally biased stretch (polar residues) spans 4072–4088; the sequence is GRATSPTQSTSSWQKSR. A compositionally biased stretch (low complexity) spans 4089 to 4610; sequence TTTLVTTSTT…TTPVSKTSTS (522 aa). Residues 4093 to 4595 are 58 X 8 AA approximate tandem repeats of T-T-S-T-T-S-A-P; that stretch reads VTTSTTSTPQ…TSGPGTTPSP (503 aa). 16 O-linked (GalNAc) threonine glycosylation sites follow: threonine 4224, threonine 4234, threonine 4296, threonine 4306, threonine 4320, threonine 4330, threonine 4376, threonine 4386, threonine 4440, threonine 4450, threonine 4480, threonine 4490, threonine 4512, threonine 4522, threonine 4568, and threonine 4578. The span at 4611 to 4624 shows a compositional bias: polar residues; the sequence is HLSVSKTTHSQPVT. The Cys-rich subdomain 9 repeat unit spans residues 4627 to 4731; the sequence is CHPLCAWTKW…VLCCETPRGC (105 aa). Residue tryptophan 4633 is glycosylated (C-linked (Man) tryptophan). The segment at 4830-4849 is disordered; the sequence is TLPPAPATSPSISTSEPVTE. Positions 4852-4918 constitute a VWFC 2 domain; that stretch reads CPNAVPPRKK…DGCCHHYQCQ (67 aa). Residues asparagine 4869 and asparagine 4942 are each glycosylated (N-linked (GlcNAc...) asparagine). The region spanning 4919 to 5103 is the VWFD 4 domain; it reads CVCSGWGDPH…VSIPDQPACH (185 aa). Intrachain disulfides connect cysteine 4921-cysteine 5063, cysteine 4943-cysteine 5102, and cysteine 4967-cysteine 4975. 3 N-linked (GlcNAc...) asparagine glycosylation sites follow: asparagine 5057, asparagine 5093, and asparagine 5236. The 70-residue stretch at 5276–5345 folds into the VWFC 3 domain; the sequence is PRCLGPHGEP…GQCCPQYSCA (70 aa). Asparagine 5347, asparagine 5377, asparagine 5386, asparagine 5455, and asparagine 5528 each carry an N-linked (GlcNAc...) asparagine glycan. One can recognise a VWFC 4 domain in the interval 5381 to 5448; it reads TVCSINGTLY…QSGQCCGTCV (68 aa). Intrachain disulfides connect cysteine 5532/cysteine 5582, cysteine 5546/cysteine 5596, cysteine 5557/cysteine 5612, and cysteine 5561/cysteine 5614. The 89-residue stretch at 5532 to 5620 folds into the CTCK domain; sequence CAVYHRSLII…ECGCMGRRCP (89 aa). The N-linked (GlcNAc...) asparagine glycan is linked to asparagine 5591. Residues 5622–5654 form a disordered region; the sequence is PGDTQHSEEAEPEPSQEAESGSWERGVPVSPMH.

As to quaternary structure, homomultimer; disulfide-linked. The N- and C-terminus mediate their assembly into higher order structures to form filaments. The CTCK domains of two polypeptides associate in the endoplasmic reticulum to generate intermolecularly disulfide-bonded dimers. These dimers progress to the Golgi apparatus, which is a more acidic environment than the endoplasmic reticulum. Under acidic conditions, the N-termini form non-covalent intermolecular interactions that juxtapose assemblies from different CTCK-linked dimers to produce long, disulfide-linked polymers that remain highly compact until secretion. C-, O- and N-glycosylated. O-glycosylated on the second and last Thr of the Thr-/Ser-rich tandem repeats TTPSPVPTTSTTSA. One form of glycosylation is also known as Lewis B (LeB) blood group antigen, a tetrasaccharide consisting of N-acetylglucosamine having a fucosyl residue attached. It has a role as an epitope and antigen and functions as a receptor for H.pylori binding and facilitates infection. C-mannosylation in the Cys-rich subdomains may be required for proper folding of these regions and for export from the endoplasmic reticulum during biosynthesis. In terms of processing, proteolytic cleavage in the C-terminal is initiated early in the secretory pathway and does not involve a serine protease. The extent of cleavage is increased in the acidic parts of the secretory pathway. Cleavage generates a reactive group which could link the protein to a primary amide. Highly expressed in surface mucosal cells of respiratory tract and stomach epithelia. Overexpressed in a number of carcinomas. Also expressed in Barrett's esophagus epithelium and in the proximal duodenum.

It localises to the secreted. In terms of biological role, gel-forming glycoprotein of gastric and respiratory tract epithelia that protects the mucosa from infection and chemical damage by binding to inhaled microorganisms and particles that are subsequently removed by the mucociliary system. Interacts with H.pylori in the gastric epithelium, Barrett's esophagus as well as in gastric metaplasia of the duodenum (GMD). This chain is Mucin-5AC, found in Homo sapiens (Human).